A 349-amino-acid polypeptide reads, in one-letter code: Holliday junction branch migration complex subunit RuvB (349 aa).

Residues 1–185 are large ATPase domain (RuvB-L); it reads MSQEKERLIS…FGSIFRLDFY (185 aa). ATP is bound by residues L24, R25, G66, K69, T70, T71, 132–134, R175, Y185, and R222; that span reads EDY. T70 provides a ligand contact to Mg(2+). The segment at 186-256 is small ATPAse domain (RuvB-S); it reads DEEAIHDIVR…IAAESLACLE (71 aa). A head domain (RuvB-H) region spans residues 259–349; it reads KLGLDEIDHK…QQGLWTENGS (91 aa). 2 residues coordinate DNA: R314 and R319.

The protein belongs to the RuvB family. As to quaternary structure, homohexamer. Forms an RuvA(8)-RuvB(12)-Holliday junction (HJ) complex. HJ DNA is sandwiched between 2 RuvA tetramers; dsDNA enters through RuvA and exits via RuvB. An RuvB hexamer assembles on each DNA strand where it exits the tetramer. Each RuvB hexamer is contacted by two RuvA subunits (via domain III) on 2 adjacent RuvB subunits; this complex drives branch migration. In the full resolvosome a probable DNA-RuvA(4)-RuvB(12)-RuvC(2) complex forms which resolves the HJ.

It is found in the cytoplasm. The enzyme catalyses ATP + H2O = ADP + phosphate + H(+). The RuvA-RuvB-RuvC complex processes Holliday junction (HJ) DNA during genetic recombination and DNA repair, while the RuvA-RuvB complex plays an important role in the rescue of blocked DNA replication forks via replication fork reversal (RFR). RuvA specifically binds to HJ cruciform DNA, conferring on it an open structure. The RuvB hexamer acts as an ATP-dependent pump, pulling dsDNA into and through the RuvAB complex. RuvB forms 2 homohexamers on either side of HJ DNA bound by 1 or 2 RuvA tetramers; 4 subunits per hexamer contact DNA at a time. Coordinated motions by a converter formed by DNA-disengaged RuvB subunits stimulates ATP hydrolysis and nucleotide exchange. Immobilization of the converter enables RuvB to convert the ATP-contained energy into a lever motion, pulling 2 nucleotides of DNA out of the RuvA tetramer per ATP hydrolyzed, thus driving DNA branch migration. The RuvB motors rotate together with the DNA substrate, which together with the progressing nucleotide cycle form the mechanistic basis for DNA recombination by continuous HJ branch migration. Branch migration allows RuvC to scan DNA until it finds its consensus sequence, where it cleaves and resolves cruciform DNA. This Dehalococcoides mccartyi (strain CBDB1) protein is Holliday junction branch migration complex subunit RuvB.